Here is a 4158-residue protein sequence, read N- to C-terminus: Dynein axonemal heavy chain 6 (4158 aa).

The tract at residues 1–1433 (MTFRATDSEF…VARMALSQYT (1433 aa)) is stem. Residue 192–199 (IIRENEHL) participates in ATP binding. Residues 805–859 (CVHLGSDLEELNNEVNEVKLQAQDPQILDISADQDKIRLILNNLQSVLADLQKRA) are a coiled coil. 4 AAA regions span residues 1434-1655 (YGYE…VLVM), 1715-1948 (STIV…KKCS), 2058-2306 (KYNR…CVQG), and 2408-2659 (DYNL…LRRR). ATP is bound by residues 1472–1479 (GPAGTGKT), 1753–1760 (GPTGGGKT), 2096–2103 (GITGVGKS), and 2447–2454 (GVGGTGKQ). The tract at residues 2676–2961 (SMLSEKRKQI…KTMALTKARL (286 aa)) is stalk. A coiled-coil region spans residues 2901–2996 (KRQKLRAAQA…EEISNITGNV (96 aa)). 2 AAA regions span residues 3042 to 3272 (LGDP…AIKT) and 3509 to 3730 (LTDF…NLKL).

The protein belongs to the dynein heavy chain family. The dynein complex consists of at least two heavy chains and a number of intermediate and light chains. Expressed in several tissues, including brain, pituitary, testis and trachea, with highest levels in testis.

The protein localises to the cytoplasm. Its subcellular location is the cytoskeleton. The protein resides in the cilium axoneme. In terms of biological role, force generating protein of respiratory cilia. Produces force towards the minus ends of microtubules. Dynein has ATPase activity; the force-producing power stroke is thought to occur on release of ADP. The polypeptide is Dynein axonemal heavy chain 6 (Homo sapiens (Human)).